The sequence spans 191 residues: Cell division protein SepF (191 aa).

Polar residues predominate over residues 156–167 (EEASPSNMSNKG). The segment at 156–191 (EEASPSNMSNKGNDLISKETSPAPEPAWGETVATAL) is disordered.

This sequence belongs to the SepF family. Homodimer. Interacts with FtsZ.

The protein resides in the cytoplasm. Functionally, cell division protein that is part of the divisome complex and is recruited early to the Z-ring. Probably stimulates Z-ring formation, perhaps through the cross-linking of FtsZ protofilaments. Its function overlaps with FtsA. In Prochlorococcus marinus (strain NATL1A), this protein is Cell division protein SepF.